Here is a 472-residue protein sequence, read N- to C-terminus: MADDTSNDAGQKASSAMWGGRFSAGPSAVMEAINASIDIDQRMADQDIDGSLAHSRMLAATGVISSADAAAIQRGLEQVRSEIHAGDFPWSKALEDVHMNVEARLKEIIGEPAGRLHTARSRNDQVATDFRLWLRDACDRIDAMLAAYQTALVKQAETHADQVMPGFTHLQTAQPVSLGHHLLSYVEVAQRDRGRFADARKRLNESPLGCAALAGTAFPIDREMTASDLGFDRPMANSLDGVAARDFALEVLSAASICAVNLSRFAEEIVLWCTRRFGFATLSDAWSTGSSIMPQKRNPDAAELVRAKPGRIIGSLTGLLTVVKGLPLAYSKDLQEDKAPVFQAIDDLELALLSMAGMAGDLSFFPEALEEAAGEAYSDATDLADYVVRELGKPFRDAHHISGSIVKLAEARGVPLAELSLAEMQSVEPAIDETVFSVLSARASMMSRTSFGGTSPIRVREQVAIWKDRLGC.

The protein belongs to the lyase 1 family. Argininosuccinate lyase subfamily.

The protein resides in the cytoplasm. It catalyses the reaction 2-(N(omega)-L-arginino)succinate = fumarate + L-arginine. The protein operates within amino-acid biosynthesis; L-arginine biosynthesis; L-arginine from L-ornithine and carbamoyl phosphate: step 3/3. The protein is Argininosuccinate lyase of Maricaulis maris (strain MCS10) (Caulobacter maris).